A 530-amino-acid polypeptide reads, in one-letter code: GMP synthase [glutamine-hydrolyzing] (530 aa).

A Glutamine amidotransferase type-1 domain is found at 4-205; that stretch reads RILILDYGSQ…VKDICGCEGD (202 aa). Cysteine 84 acts as the Nucleophile in catalysis. Residues histidine 179 and glutamate 181 contribute to the active site. The 193-residue stretch at 206–398 folds into the GMPS ATP-PPase domain; that stretch reads WNMPDYISEA…LGLPPQMVYR (193 aa). ATP is bound at residue 233-239; the sequence is SGGVDSL.

As to quaternary structure, homodimer.

The enzyme catalyses XMP + L-glutamine + ATP + H2O = GMP + L-glutamate + AMP + diphosphate + 2 H(+). It functions in the pathway purine metabolism; GMP biosynthesis; GMP from XMP (L-Gln route): step 1/1. Its function is as follows. Catalyzes the synthesis of GMP from XMP. This is GMP synthase [glutamine-hydrolyzing] from Bordetella parapertussis (strain 12822 / ATCC BAA-587 / NCTC 13253).